The chain runs to 208 residues: Na(+)-translocating NADH-quinone reductase subunit D (208 aa).

The next 5 helical transmembrane spans lie at 42–62 (IVMG…ISLV), 72–92 (IIVQ…LLQA), 103–123 (VFVG…AFAM), 131–151 (LIDG…VATV), and 178–198 (NGLF…IWGL).

Belongs to the NqrDE/RnfAE family. As to quaternary structure, composed of six subunits; NqrA, NqrB, NqrC, NqrD, NqrE and NqrF.

Its subcellular location is the cell inner membrane. The enzyme catalyses a ubiquinone + n Na(+)(in) + NADH + H(+) = a ubiquinol + n Na(+)(out) + NAD(+). In terms of biological role, NQR complex catalyzes the reduction of ubiquinone-1 to ubiquinol by two successive reactions, coupled with the transport of Na(+) ions from the cytoplasm to the periplasm. NqrA to NqrE are probably involved in the second step, the conversion of ubisemiquinone to ubiquinol. This chain is Na(+)-translocating NADH-quinone reductase subunit D, found in Neisseria gonorrhoeae (strain ATCC 700825 / FA 1090).